The following is a 511-amino-acid chain: Exodeoxyribonuclease 7 large subunit (511 aa).

This sequence belongs to the XseA family. Heterooligomer composed of large and small subunits.

It localises to the cytoplasm. The enzyme catalyses Exonucleolytic cleavage in either 5'- to 3'- or 3'- to 5'-direction to yield nucleoside 5'-phosphates.. Functionally, bidirectionally degrades single-stranded DNA into large acid-insoluble oligonucleotides, which are then degraded further into small acid-soluble oligonucleotides. The polypeptide is Exodeoxyribonuclease 7 large subunit (Brucella suis biovar 1 (strain 1330)).